A 61-amino-acid chain; its full sequence is MARTALKVKAKRKPKFKVREYNRCPICGRPRAFLRKYGICRICFREKALAGELPGVRKASW.

The Zn(2+) site is built by Cys-24, Cys-27, Cys-40, and Cys-43.

The protein belongs to the universal ribosomal protein uS14 family. Zinc-binding uS14 subfamily. As to quaternary structure, part of the 30S ribosomal subunit. Contacts proteins S3 and S10. Requires Zn(2+) as cofactor.

Functionally, binds 16S rRNA, required for the assembly of 30S particles and may also be responsible for determining the conformation of the 16S rRNA at the A site. The sequence is that of Small ribosomal subunit protein uS14 from Maridesulfovibrio salexigens (strain ATCC 14822 / DSM 2638 / NCIMB 8403 / VKM B-1763) (Desulfovibrio salexigens).